A 349-amino-acid chain; its full sequence is CCN family member 2 (349 aa).

An N-terminal signal peptide occupies residues 1 to 26 (MTAASMGPVRVAFVVLLALCSRPAVG). The region spanning 27-98 (QNCSGPCRCP…NRKIGVCTAK (72 aa)) is the IGFBP N-terminal domain. A glycan (N-linked (GlcNAc...) asparagine) is linked at asparagine 28. Disulfide bonds link cysteine 29–cysteine 54, cysteine 33–cysteine 56, cysteine 35–cysteine 57, cysteine 43–cysteine 60, cysteine 68–cysteine 82, and cysteine 74–cysteine 95. Positions 101-167 (APCIFGGTVY…GKCCEEWVCD (67 aa)) constitute a VWFC domain. One can recognise a TSP type-1 domain in the interval 198–243 (NCLVQTTEWSACSKTCGMGISTRVTNDNASCRLEKQSRLCMVRPCE). N-linked (GlcNAc...) asparagine glycosylation occurs at asparagine 225. A heparin-binding region spans residues 247–349 (EENIKKGKKC…YYRKMYGDMA (103 aa)). 5 disulfide bridges follow: cysteine 256-cysteine 293, cysteine 273-cysteine 307, cysteine 284-cysteine 323, cysteine 287-cysteine 325, and cysteine 292-cysteine 329. The 75-residue stretch at 256–330 (CIRTPKISKP…KTCACHYNCP (75 aa)) folds into the CTCK domain.

This sequence belongs to the CCN family. Monomer. Interacts with TSKU. As to expression, expressed in bone marrow and thymic cells. Also expressed one of two Wilms tumors tested.

Its subcellular location is the secreted. The protein resides in the extracellular space. It is found in the extracellular matrix. Functionally, major connective tissue mitoattractant secreted by vascular endothelial cells. Promotes proliferation and differentiation of chondrocytes. Is involved in the stimulation of osteoblast differentiation and has a critical role in osteogenesis. Mediates heparin- and divalent cation-dependent cell adhesion in many cell types including fibroblasts, myofibroblasts, endothelial and epithelial cells. Enhances fibroblast growth factor-induced DNA synthesis. This chain is CCN family member 2, found in Homo sapiens (Human).